A 418-amino-acid polypeptide reads, in one-letter code: MIHSLFLINSSGDIFLEKHWKSVVSRSVCDYFFEAQERATEAENVPPVIPTPHHYLLSVYRHKIFFVAVIQTEVPPLFVIEFLHRVVDTFQDYFGVCSEPVIKDNVVVVYEVLEEMLDNGFPLATESNILKELIKPPTILRTVVNTITGSTNVGDQLPTGQLSVVPWRRTGVKYTNNEAYFDVIEEIDAIIDKSGSTITAEIQGVIDACVKLTGMPDLTLSFMNPRLLDDVSFHPCVRFKRWESERILSFIPPDGNFRLLSYHVSAQNLVAIPVYVKHNISFRDSSSLGRFEITVGPKQTMGKTIEGVTVTSQMPKGVLNMSLTPSQGTHTFDPVTKMLSWDVGKINPQKLPSLKGTMSLQAGASKPDENPTINLQFKIQQLAISGLKVNRLDMYGEKYKPFKGIKYMTKAGKFQVRT.

An MHD domain is found at 176–417 (NNEAYFDVIE…MTKAGKFQVR (242 aa)).

The protein belongs to the adaptor complexes medium subunit family. AP-3 associates with the BLOC-1 complex. Adaptor protein complex 3 (AP-3) is a heterotetramer composed of two large adaptins (delta-type subunit AP3D1 and beta-type subunit AP3B1 or AP3B2), a medium adaptin (mu-type subunit AP3M1 or AP3M2) and a small adaptin (sigma-type subunit APS1 or AP3S2).

It is found in the golgi apparatus. It localises to the cytoplasmic vesicle membrane. Functionally, part of the AP-3 complex, an adaptor-related complex which is not clathrin-associated. The complex is associated with the Golgi region as well as more peripheral structures. It facilitates the budding of vesicles from the Golgi membrane and may be directly involved in trafficking to lysosomes. In concert with the BLOC-1 complex, AP-3 is required to target cargos into vesicles assembled at cell bodies for delivery into neurites and nerve terminals. The sequence is that of AP-3 complex subunit mu-2 (AP3M2) from Homo sapiens (Human).